We begin with the raw amino-acid sequence, 498 residues long: ATP synthase subunit alpha 1 (498 aa).

It belongs to the ATPase alpha/beta chains family. As to quaternary structure, F-type ATPases have 2 components, CF(1) - the catalytic core - and CF(0) - the membrane proton channel. CF(1) has five subunits: alpha(3), beta(3), gamma(1), delta(1), epsilon(1). CF(0) has three main subunits: a(1), b(2) and c(9-12). The alpha and beta chains form an alternating ring which encloses part of the gamma chain. CF(1) is attached to CF(0) by a central stalk formed by the gamma and epsilon chains, while a peripheral stalk is formed by the delta and b chains.

The protein localises to the cell membrane. It carries out the reaction ATP + H2O + 4 H(+)(in) = ADP + phosphate + 5 H(+)(out). In terms of biological role, produces ATP from ADP in the presence of a proton gradient across the membrane. The alpha chain is a regulatory subunit. The polypeptide is ATP synthase subunit alpha 1 (Listeria monocytogenes serotype 4b (strain F2365)).